Here is a 296-residue protein sequence, read N- to C-terminus: Acetaldehyde dehydrogenase (296 aa).

15–18 (SGNI) contacts NAD(+). C132 functions as the Acyl-thioester intermediate in the catalytic mechanism. Residues 164-172 (SAGPATRAN) and N274 contribute to the NAD(+) site.

The protein belongs to the acetaldehyde dehydrogenase family. As to quaternary structure, interacts with MhpE.

The catalysed reaction is acetaldehyde + NAD(+) + CoA = acetyl-CoA + NADH + H(+). The protein operates within aromatic compound metabolism; 3-phenylpropanoate degradation. Its function is as follows. Catalyzes the conversion of acetaldehyde to acetyl-CoA, using NAD(+) and coenzyme A. Is the final enzyme in the meta-cleavage pathway for the degradation of aromatic compounds. This chain is Acetaldehyde dehydrogenase, found in Pectobacterium atrosepticum (strain SCRI 1043 / ATCC BAA-672) (Erwinia carotovora subsp. atroseptica).